The primary structure comprises 361 residues: MEMMQDSFQVHRIPQSKYVDGVRWLPQASALNRFFATASYDADCDSSSIEIQSLDPNPRGNHNTNPLIESLSSWTSPSRVSSLEVAGNGGGGGSFKPMVSAATSSGSLHVLMIDLVEGAAIEEFYAAEGERFHVGRVEGVDWREGGECVTVGEDGRVNVVKIVNGEGLRYRKVFDGNGLVAYRAVKWASPTEFVTGGYGFGLQLWDQRKSGEAVSQLKGNWFQGKTSAIVHSIDIHPSRKHTCIAGGSSGTVFAWDLRWPQQPIVLSGVGASENINNPLSESEVWEVQYDSYTKSNVSSSRILPVMTCSEDGILGIIEQGEEPIELLAEPCAINSFDIDRQNPQDVICSLEWESIAVFSRP.

Residues 51-73 are disordered; that stretch reads IQSLDPNPRGNHNTNPLIESLSS. WD repeat units follow at residues 132 to 173, 177 to 215, and 225 to 265; these read FHVG…YRKV, NGLV…EAVS, and KTSA…QPIV.

Part of the nuclear pore complex (NPC). The NPC has an eight-fold symmetrical structure comprising a central transport channel and two rings, the cytoplasmic and nuclear rings, to which eight filaments are attached. The cytoplasmic filaments have loose ends, while the nuclear filaments are joined in a distal ring, forming a nuclear basket. NPCs are highly dynamic in configuration and composition, and can be devided in 3 subcomplexes, the NUP62 subcomplex, the NUP107-160 subcomplex and the NUP93 subcomplex, containing approximately 30 different nucleoporin proteins.

The protein resides in the nucleus envelope. It is found in the nucleus. It localises to the nuclear pore complex. The sequence is that of Nuclear pore complex protein NUP43 from Arabidopsis thaliana (Mouse-ear cress).